Here is a 171-residue protein sequence, read N- to C-terminus: Large ribosomal subunit protein uL10 (171 aa).

This sequence belongs to the universal ribosomal protein uL10 family. Part of the ribosomal stalk of the 50S ribosomal subunit. The N-terminus interacts with L11 and the large rRNA to form the base of the stalk. The C-terminus forms an elongated spine to which L12 dimers bind in a sequential fashion forming a multimeric L10(L12)X complex.

Forms part of the ribosomal stalk, playing a central role in the interaction of the ribosome with GTP-bound translation factors. This chain is Large ribosomal subunit protein uL10, found in Corynebacterium diphtheriae (strain ATCC 700971 / NCTC 13129 / Biotype gravis).